The following is a 91-amino-acid chain: Small ribosomal subunit protein bS16 (91 aa).

It belongs to the bacterial ribosomal protein bS16 family.

The protein is Small ribosomal subunit protein bS16 of Staphylococcus haemolyticus (strain JCSC1435).